A 1971-amino-acid polypeptide reads, in one-letter code: Germinal-center associated nuclear protein (1971 aa).

2 disordered regions span residues 1–50 and 214–406; these read MHPV…KSLA and PAFA…RGKS. Residues 8–29 show a composition bias toward polar residues; sequence GGQQPSAFAVSSSTTGTYQTKS. Arg32 is modified (asymmetric dimethylarginine). An FG-repeats region spans residues 33–335; the sequence is FGQPSLFGQN…RPRGGTLFGR (303 aa). Composition is skewed to polar residues over residues 38-50 and 214-224; these read LFGQ…KSLA and PAFASPLSNQN. The span at 232–253 shows a compositional bias: low complexity; sequence STSAFGSSNSSFSTFPTASPGS. Basic and acidic residues-rich tracts occupy residues 288–321 and 342–359; these read RKED…DKRP and KSNK…KESG. The DNA primase stretch occupies residues 414 to 550; it reads EEWIYSLGGV…AAGSLLSKSS (137 aa). Position 424 is a phosphoserine (Ser424). An N6-acetyllysine mark is found at Lys483 and Lys484. Phosphoserine is present on residues Ser502, Ser531, and Ser550. The 184-residue stretch at 768–951 folds into the PCI domain; sequence NNENMTKCLQ…RKSVFIGRKL (184 aa). Residues 1124–1162 adopt a coiled-coil conformation; the sequence is HVAAEEVSMERQRLEEEKQRAEEERLKQERELMLTQLSE. Positions 1793 to 1840 are disordered; that stretch reads RELQLSHGRSGMRSIHPPTSTFPTPLLHVHQKGKKKEESGREGSLSTE.

Belongs to the SAC3 family. Component of the nuclear pore complex (NPC)-associated TREX-2 complex (transcription and export complex 2), composed of at least GANP, 2 copies of ENY2, PCID2, SEM1/DSS1, and either centrin CETN2 or centrin CETN3. The TREX-2 complex also associates with ALYREF/ALY. Interacts with RNA polymerase II subunit POLR2A and with the transcription elongation factor SUPT5H/SPT5. Interacts (via FG-repeats) with NXF1; this interaction is not mediated by RNA. Interacts with nuclear envelope proteins NUP62, NUP153 and RANBP2/NUP358; interaction with NUP153 is required for full localization at the nuclear pore complex. Interacts with several RNA helicases, including DHX9, DDX21, and DDX39A/DDX39, and with DNA topoisomerase TOP2A. Directly interacts with AICDA/AID. Interacts with the glucocorticoid receptor NR3C1. Interacts with MCM3. Phosphorylation at Ser-502 is induced in B-cells by CD40-stimulation, but not by bacterial lipopolysaccharide (LPS). Expressed at low levels in lymphoid organs, including thymus, spleen and lymph nodes. Up-regulated in stimulated B-cells in spleen and Peyer's patch germinal centers (at protein level).

It localises to the cytoplasm. It is found in the nucleus. The protein localises to the nucleus envelope. Its subcellular location is the nuclear pore complex. The protein resides in the nucleoplasm. It localises to the chromosome. It carries out the reaction L-lysyl-[histone] + acetyl-CoA = N(6)-acetyl-L-lysyl-[histone] + CoA + H(+). Its function is as follows. As a component of the TREX-2 complex, involved in the export of mRNAs to the cytoplasm through the nuclear pores. Through the acetylation of histones, affects the assembly of nucleosomes at immunoglobulin variable region genes and promotes the recruitment and positioning of transcription complex to favor DNA cytosine deaminase AICDA/AID targeting, hence promoting somatic hypermutations. The polypeptide is Germinal-center associated nuclear protein (Mcm3ap) (Mus musculus (Mouse)).